The following is a 211-amino-acid chain: Protein-L-isoaspartate O-methyltransferase (211 aa).

The active site involves S62.

It belongs to the methyltransferase superfamily. L-isoaspartyl/D-aspartyl protein methyltransferase family.

It localises to the cytoplasm. It catalyses the reaction [protein]-L-isoaspartate + S-adenosyl-L-methionine = [protein]-L-isoaspartate alpha-methyl ester + S-adenosyl-L-homocysteine. In terms of biological role, catalyzes the methyl esterification of L-isoaspartyl residues in peptides and proteins that result from spontaneous decomposition of normal L-aspartyl and L-asparaginyl residues. It plays a role in the repair and/or degradation of damaged proteins. The chain is Protein-L-isoaspartate O-methyltransferase from Shewanella pealeana (strain ATCC 700345 / ANG-SQ1).